Reading from the N-terminus, the 349-residue chain is MIEFDNLTYLHGKPQGTGLLKANPEDFVVVEDLGFEPDGEGEHILVRILKNGCNTRFVADALAKFLKIHAREVSFAGQKDKHAVTEQWLCARVPGKEMPDLSAFQLEGCQVLEYARHKRKLRLGALKGNAFTLVLREVSNRDDVEQRLIDICVKGVPNYFGAQRFGIGGSNLQGAQRWAQTNTPVRDRNKRSFWLSAARSALFNQIVAERLKKADVNQVVDGDALQLAGRGSWFVATTEELAELQRRVNDKELMITAALPGSGEWGTQREALAFEQAAVAAETELQALLVREKVEAARRAMLLYPQQLSWNWWDDVTVEIRFWLPAGSFATSVVRELINTTGDYAHIAE.

A substrate-binding site is contributed by Phe-27. Asp-80 serves as the catalytic Nucleophile. Asn-129 is a substrate binding site. A TRUD domain is found at Gly-155–Leu-303. Residue Phe-329 coordinates substrate.

This sequence belongs to the pseudouridine synthase TruD family.

The enzyme catalyses uridine(13) in tRNA = pseudouridine(13) in tRNA. Responsible for synthesis of pseudouridine from uracil-13 in transfer RNAs. This chain is tRNA pseudouridine synthase D, found in Escherichia coli (strain K12 / MC4100 / BW2952).